A 50-amino-acid polypeptide reads, in one-letter code: MFKRKSTAELAAQMAKLAGNKGGFSSEDKGEWKLKLDNAGNGQAVIRFLP.

In terms of assembly, homodimer in the absence of DNA, monomer when binding DNA.

In terms of biological role, binds preferentially to single-stranded DNA and therefore, destabilizes double-stranded DNA. It is involved in DNA replication, repair and recombination. Binds ss-DNA as the replication fork advances and stimulates the replisome processivity and accuracy. The polypeptide is Single-stranded DNA-binding protein (32) (Escherichia coli (Bacteriophage RB15)).